The sequence spans 189 residues: Protein C1orf43 homolog (189 aa).

The helical transmembrane segment at valine 11–valine 31 threads the bilayer.

The protein resides in the membrane. It is found in the golgi apparatus. Its subcellular location is the mitochondrion. General regulator of phagocytosis. Required to uptake Gram negative bacterium by macrophages. This Pongo abelii (Sumatran orangutan) protein is Protein C1orf43 homolog.